Reading from the N-terminus, the 1121-residue chain is Peroxisomal ATPase PEX1 (1121 aa).

Disordered stretches follow at residues Ser187–Glu221 and Ser1099–Met1121. Residues Ser205–Thr217 show a composition bias toward low complexity.

It belongs to the AAA ATPase family. In terms of assembly, interacts with PEX6; forming the PEX1-PEX6 AAA ATPase complex, which is composed of a heterohexamer formed by a trimer of PEX1-PEX6 dimers.

Its subcellular location is the membrane. The enzyme catalyses ATP + H2O = ADP + phosphate + H(+). Component of the PEX1-PEX6 AAA ATPase complex involved in peroxisome biosynthesis. The complex acts as a protein dislocase complex that mediates the ATP-dependent extraction of the PEX5 receptor from peroxisomal membranes, an essential step for PEX5 recycling. Specifically recognizes PEX5 monoubiquitinated at 'Cys-6', and pulls it out of the peroxisome lumen through the PEX2-PEX10-PEX12 retrotranslocation channel. Extraction by the PEX1-PEX6 AAA ATPase complex is accompanied by unfolding of the TPR repeats and release of bound cargo from PEX5. This is Peroxisomal ATPase PEX1 from Komagataella phaffii (strain GS115 / ATCC 20864) (Yeast).